Consider the following 548-residue polypeptide: Tryprostatin B 6-hydroxylase (548 aa).

3 consecutive transmembrane segments (helical) span residues 5–25 (MKCG…LWYF), 35–54 (WRYV…LLYA), and 73–93 (LLMV…RTLF). Cysteine 491 provides a ligand contact to heme.

Belongs to the cytochrome P450 family. Requires heme as cofactor.

It localises to the membrane. The enzyme catalyses tryprostatin B + reduced [NADPH--hemoprotein reductase] + O2 = 6-hydroxytryprostatin B + oxidized [NADPH--hemoprotein reductase] + H2O + H(+). It participates in mycotoxin biosynthesis. Cytochrome P450 monooxygenase; part of the gene cluster that mediates the biosynthesis of fumitremorgins, indole alkaloids that carry not only intriguing chemical structures, but also interesting biological and pharmacological activities. The biosynthesis of fumitremorgin-type alkaloids begins by condensation of the two amino acids L-tryptophan and L-proline to brevianamide F, catalyzed by the non-ribosomal peptide synthetase ftmPS/ftmA. Brevianamide F is then prenylated by the prenyltransferase ftmPT1/ftmB in the presence of dimethylallyl diphosphate, resulting in the formation of tryprostatin B. The three cytochrome P450 monooxygenases, ftmP450-1/ftmC, ftmP450-2/ftmE and ftmP450-3/FtmG, are responsible for the conversion of tryprostatin B to 6-hydroxytryprostatin B, tryprostatin A to fumitremorgin C and fumitremorgin C to 12,13-dihydroxyfumitremorgin C, respectively. The putative methyltransferase ftmMT/ftmD is expected for the conversion of 6-hydroxytryprostatin B to tryprostatin A. FtmPT2/FtmH catalyzes the prenylation of 12,13-dihydroxyfumitre-morgin C in the presence of dimethylallyl diphosphate, resulting in the formation of fumitremorgin B. Fumitremorgin B is further converted to verruculogen by ftmOx1/ftmF via the insertion of an endoperoxide bond between the two prenyl moieties. Finally, verruculogen is further converted to fumitremorgin A by the verruculogen prenyltransferase ftmPT3. This is Tryprostatin B 6-hydroxylase from Neosartorya fischeri (strain ATCC 1020 / DSM 3700 / CBS 544.65 / FGSC A1164 / JCM 1740 / NRRL 181 / WB 181) (Aspergillus fischerianus).